The sequence spans 131 residues: Small ribosomal subunit protein uS9 (131 aa).

This sequence belongs to the universal ribosomal protein uS9 family.

The sequence is that of Small ribosomal subunit protein uS9 from Mannheimia succiniciproducens (strain KCTC 0769BP / MBEL55E).